The chain runs to 359 residues: N-acetyl-gamma-glutamyl-phosphate reductase (359 aa).

Residue Cys162 is part of the active site.

Belongs to the NAGSA dehydrogenase family. Type 1 subfamily.

Its subcellular location is the cytoplasm. It carries out the reaction N-acetyl-L-glutamate 5-semialdehyde + phosphate + NADP(+) = N-acetyl-L-glutamyl 5-phosphate + NADPH + H(+). It participates in amino-acid biosynthesis; L-arginine biosynthesis; N(2)-acetyl-L-ornithine from L-glutamate: step 3/4. In terms of biological role, catalyzes the NADPH-dependent reduction of N-acetyl-5-glutamyl phosphate to yield N-acetyl-L-glutamate 5-semialdehyde. This chain is N-acetyl-gamma-glutamyl-phosphate reductase, found in Prochlorococcus marinus (strain NATL1A).